Here is a 247-residue protein sequence, read N- to C-terminus: Type III pantothenate kinase (247 aa).

7–14 (AIGNSRWH) is an ATP binding site. Residues Tyr-91 and 95-98 (GLDR) contribute to the substrate site. Residue Asp-97 is the Proton acceptor of the active site. Residue Asp-117 coordinates K(+). Thr-120 provides a ligand contact to ATP. Thr-172 is a binding site for substrate.

It belongs to the type III pantothenate kinase family. Homodimer. The cofactor is NH4(+). K(+) is required as a cofactor.

It localises to the cytoplasm. The catalysed reaction is (R)-pantothenate + ATP = (R)-4'-phosphopantothenate + ADP + H(+). It functions in the pathway cofactor biosynthesis; coenzyme A biosynthesis; CoA from (R)-pantothenate: step 1/5. In terms of biological role, catalyzes the phosphorylation of pantothenate (Pan), the first step in CoA biosynthesis. The chain is Type III pantothenate kinase from Synechococcus elongatus (strain ATCC 33912 / PCC 7942 / FACHB-805) (Anacystis nidulans R2).